The chain runs to 252 residues: 2,5-diamino-6-ribosylamino-4(3H)-pyrimidinone 5'-phosphate reductase (252 aa).

NADP(+) contacts are provided by residues Thr80, Asp84, Val166, and 189 to 193; that span reads GGIVI.

This sequence belongs to the HTP reductase family. Homodimer.

The catalysed reaction is 2,5-diamino-6-(1-D-ribitylamino)pyrimidin-4(3H)-one 5'-phosphate + NADP(+) = 2,5-diamino-6-(1-D-ribosylamino)pyrimidin-4(3H)-one 5'-phosphate + NADPH + H(+). It carries out the reaction 2,5-diamino-6-(1-D-ribitylamino)pyrimidin-4(3H)-one 5'-phosphate + NAD(+) = 2,5-diamino-6-(1-D-ribosylamino)pyrimidin-4(3H)-one 5'-phosphate + NADH + H(+). Its pathway is cofactor biosynthesis; riboflavin biosynthesis. Catalyzes an early step in riboflavin biosynthesis, the NADPH-dependent reduction of the ribose side chain of 2,5-diamino-6-ribosylamino-4(3H)-pyrimidinone 5'-phosphate, yielding 2,5-diamino-6-ribitylamino-4(3H)-pyrimidinone 5'-phosphate. The chain is 2,5-diamino-6-ribosylamino-4(3H)-pyrimidinone 5'-phosphate reductase (RIB7) from Kluyveromyces lactis (strain ATCC 8585 / CBS 2359 / DSM 70799 / NBRC 1267 / NRRL Y-1140 / WM37) (Yeast).